Consider the following 210-residue polypeptide: CKLF-like MARVEL transmembrane domain-containing protein 2B (210 aa).

4 helical membrane-spanning segments follow: residues 35–55 (FWAQ…IAAM), 65–85 (PIVI…FFLY), 103–123 (LMND…ALEA), and 127–147 (LPVP…ISII). The MARVEL domain maps to 35–157 (FWAQGHAECK…DLCLQRRQFK (123 aa)).

This sequence belongs to the chemokine-like factor family.

It localises to the membrane. The polypeptide is CKLF-like MARVEL transmembrane domain-containing protein 2B (Cmtm2b) (Mus musculus (Mouse)).